The sequence spans 320 residues: Polyisoprenyl-teichoic acid--peptidoglycan teichoic acid transferase TagU (320 aa).

Topologically, residues 1–15 (MVSRTERKQHKKRRK) are cytoplasmic. A helical; Signal-anchor for type II membrane protein membrane pass occupies residues 16–36 (WPFWLGGILLVLLLLISGGIF). The Extracellular segment spans residues 37 to 320 (LIYNQVGAVV…SEITGHMQEQ (284 aa)).

It belongs to the LytR/CpsA/Psr (LCP) family.

Its subcellular location is the cell membrane. Its pathway is cell wall biogenesis. Functionally, may catalyze the final step in cell wall teichoic acid biosynthesis, the transfer of the anionic cell wall polymers (APs) from their lipid-linked precursor to the cell wall peptidoglycan (PG). In Oceanobacillus iheyensis (strain DSM 14371 / CIP 107618 / JCM 11309 / KCTC 3954 / HTE831), this protein is Polyisoprenyl-teichoic acid--peptidoglycan teichoic acid transferase TagU.